The sequence spans 181 residues: Achaete-scute homolog 3 (181 aa).

Positions 93–106 are basic motif; it reads AFTRKRNERERQRV. Residues 93–145 form the bHLH domain; the sequence is AFTRKRNERERQRVKCVNEGYAQLRHHLPEEYLEKRLSKVETLRAAIKYINYL. Residues 107–145 are helix-loop-helix motif; it reads KCVNEGYAQLRHHLPEEYLEKRLSKVETLRAAIKYINYL.

In terms of assembly, efficient DNA binding requires dimerization with another bHLH protein. In terms of tissue distribution, widely expressed in fetal and adult tissues.

It is found in the nucleus. Functionally, transcriptional repressor. Inhibits myogenesis. Plays a role in progenitor cells which differentiate into ductal and acinar, but not myoepithelial, cell lineages in the salivary glands. Involved in the functions of the microvillar cells and Bowman's glands and probably, in a non-cell-autonomous manner, in the development or regeneration of a complete olfactory epithelium (OE). The chain is Achaete-scute homolog 3 from Homo sapiens (Human).